Reading from the N-terminus, the 344-residue chain is Fructose-bisphosphate aldolase (344 aa).

S53 contributes to the D-glyceraldehyde 3-phosphate binding site. D95 acts as the Proton donor in catalysis. 4 residues coordinate Zn(2+): H96, D131, E161, and H212. G213 is a dihydroxyacetone phosphate binding site. H252 contributes to the Zn(2+) binding site. Dihydroxyacetone phosphate-binding positions include 253–255 (GGS) and 274–277 (NVDT).

Belongs to the class II fructose-bisphosphate aldolase family. Zn(2+) serves as cofactor.

It carries out the reaction beta-D-fructose 1,6-bisphosphate = D-glyceraldehyde 3-phosphate + dihydroxyacetone phosphate. Its pathway is carbohydrate degradation; glycolysis; D-glyceraldehyde 3-phosphate and glycerone phosphate from D-glucose: step 4/4. Functionally, catalyzes the aldol condensation of dihydroxyacetone phosphate (DHAP or glycerone-phosphate) with glyceraldehyde 3-phosphate (G3P) to form fructose 1,6-bisphosphate (FBP) in gluconeogenesis and the reverse reaction in glycolysis. The polypeptide is Fructose-bisphosphate aldolase (fba) (Mycobacterium bovis (strain ATCC BAA-935 / AF2122/97)).